The following is a 151-amino-acid chain: Flagellar assembly factor FliW (151 aa).

The protein belongs to the FliW family. In terms of assembly, interacts with translational regulator CsrA and flagellin(s).

It is found in the cytoplasm. In terms of biological role, acts as an anti-CsrA protein, binds CsrA and prevents it from repressing translation of its target genes, one of which is flagellin. Binds to flagellin and participates in the assembly of the flagellum. This chain is Flagellar assembly factor FliW, found in Natranaerobius thermophilus (strain ATCC BAA-1301 / DSM 18059 / JW/NM-WN-LF).